We begin with the raw amino-acid sequence, 344 residues long: Arginine N-succinyltransferase (344 aa).

A succinyl-CoA-binding site is contributed by leucine 125. Histidine 229 acts as the Proton donor in catalysis.

The protein belongs to the arginine N-succinyltransferase family.

It carries out the reaction succinyl-CoA + L-arginine = N(2)-succinyl-L-arginine + CoA + H(+). It functions in the pathway amino-acid degradation; L-arginine degradation via AST pathway; L-glutamate and succinate from L-arginine: step 1/5. Catalyzes the transfer of succinyl-CoA to arginine to produce N(2)-succinylarginine. This chain is Arginine N-succinyltransferase, found in Shigella boydii serotype 4 (strain Sb227).